The chain runs to 349 residues: tRNA (guanine(26)-N(2))-dimethyltransferase (349 aa).

The Trm1 methyltransferase domain occupies 1–343; that stretch reads MEVEEGRARV…ADRDVVVKIL (343 aa). R25, R50, D66, D92, and A93 together coordinate S-adenosyl-L-methionine.

The protein belongs to the class I-like SAM-binding methyltransferase superfamily. Trm1 family.

It catalyses the reaction guanosine(26) in tRNA + 2 S-adenosyl-L-methionine = N(2)-dimethylguanosine(26) in tRNA + 2 S-adenosyl-L-homocysteine + 2 H(+). Dimethylates a single guanine residue at position 26 of a number of tRNAs using S-adenosyl-L-methionine as donor of the methyl groups. The polypeptide is tRNA (guanine(26)-N(2))-dimethyltransferase (Archaeoglobus fulgidus (strain ATCC 49558 / DSM 4304 / JCM 9628 / NBRC 100126 / VC-16)).